Here is a 256-residue protein sequence, read N- to C-terminus: uncharacterized protein (256 aa).

The HTH cro/C1-type domain occupies 10–64 (IRALRESRDWSLADLAAATGVSTMGLSYLERGARKPHKSTVQKVENGLGLPPGTY). Residues 21 to 40 (LADLAAATGVSTMGLSYLER) constitute a DNA-binding region (H-T-H motif).

This is an uncharacterized protein from Mycobacterium bovis (strain ATCC BAA-935 / AF2122/97).